Consider the following 316-residue polypeptide: UPF0761 membrane protein PM1616 (316 aa).

6 helical membrane-spanning segments follow: residues 36 to 56, 92 to 112, 128 to 148, 172 to 192, 204 to 224, and 236 to 256; these read MLAL…FPVF, QMSA…INSI, LVFS…LIGA, ILSF…YTVV, IGAL…LWYV, and AMAT…VILI.

This sequence belongs to the UPF0761 family.

The protein localises to the cell inner membrane. This chain is UPF0761 membrane protein PM1616, found in Pasteurella multocida (strain Pm70).